Consider the following 255-residue polypeptide: Small ribosomal subunit protein uS2 (255 aa).

Residues 232-255 (ASGRDLGASEEVPVEPALEEASEA) form a disordered region.

It belongs to the universal ribosomal protein uS2 family.

The polypeptide is Small ribosomal subunit protein uS2 (Rhizobium meliloti (strain 1021) (Ensifer meliloti)).